The primary structure comprises 958 residues: Voltage-gated inwardly rectifying potassium channel KCNH6 (958 aa).

Residues 1 to 261 are Cytoplasmic-facing; that stretch reads MPVRRGHVAP…YSPFKAVWDW (261 aa). Residues 41–70 form the PAS domain; that stretch reads IIYCNDGFCELFGYSRVEVMQQPCTCDFLT. In terms of domain architecture, PAC spans 92-144; sequence CKVDILYYRKDASSFRCLVDVVPVKNEDGAVIMFILNFEDLAQLLAKCSSRSL. The helical transmembrane segment at 262–282 threads the bilayer; sequence LILLLVIYTAVFTPYSAAFLL. At 283–298 the chain is on the extracellular side; the sequence is SDQDESRRGACSYTCS. A helical membrane pass occupies residues 299 to 319; that stretch reads PLTVVDLIVDIMFVVDIVINF. Residues 320-340 lie on the Cytoplasmic side of the membrane; sequence RTTYVNTNDEVVSHPRRIAVH. A helical membrane pass occupies residues 341–361; the sequence is YFKGWFLIDMVAAIPFDLLIF. Residues 362-370 lie on the Extracellular side of the membrane; sequence RTGSDETTT. A helical; Voltage-sensor transmembrane segment spans residues 371-391; sequence LIGLLKTARLLRLVRVARKLD. Residues 392–398 lie on the Cytoplasmic side of the membrane; it reads RYSEYGA. A helical membrane pass occupies residues 399–419; it reads AVLFLLMCTFALIAHWLACIW. The Extracellular segment spans residues 420-463; it reads YAIGNVERPYLEHKIGWLDSLGVQLGKRYNGSDPASGPSVQDKY. Residue N449 is glycosylated (N-linked (GlcNAc...) (complex) asparagine). The segment at residues 464–484 is an intramembrane region (pore-forming); the sequence is VTALYFTFSSLTSVGFGNVSP. Positions 476-481 match the Selectivity filter motif; sequence SVGFGN. Topologically, residues 485 to 490 are extracellular; that stretch reads NTNSEK. Residues 491–511 form a helical membrane-spanning segment; that stretch reads VFSICVMLIGSLMYASIFGNV. At 512–958 the chain is on the cytoplasmic side; it reads SAIIQRLYSG…DPGFAGSWGH (447 aa). The cNMP-binding domain stretch occupies residues 594–694; that stretch reads AFSGAGKGCL…IQRADLLEVL (101 aa). Disordered regions lie at residues 720–751 and 845–910; these read GLHS…PPLS and TTSP…PPLA. The segment covering 724 to 745 has biased composition (polar residues); sequence SPRQAPGSQDHQGFFLSDNQSD.

This sequence belongs to the potassium channel family. H (Eag) (TC 1.A.1.20) subfamily. Kv11.2/KCNH6 sub-subfamily. In terms of assembly, the potassium channel is probably composed of a homo- or heterotetrameric complex of pore-forming alpha subunits that can associate only within their subfamily. In terms of tissue distribution, expressed in prolactin-secreting adenomas.

Its subcellular location is the cell membrane. It carries out the reaction K(+)(in) = K(+)(out). In terms of biological role, pore-forming (alpha) subunit of voltage-gated inwardly rectifying potassium channel. Characterized by unusual gating kinetics by producing relatively small outward currents during membrane depolarization and large inward currents during subsequent repolarization which reflect a rapid inactivation during depolarization and quick recovery from inactivation but slow deactivation (closing) during repolarization. Activates even more slowly than KCNH2. This chain is Voltage-gated inwardly rectifying potassium channel KCNH6, found in Homo sapiens (Human).